The following is a 321-amino-acid chain: Dolichyl N-acetyl-alpha-D-glucosaminyl phosphate 3-beta-D-2,3-diacetamido-2,3-dideoxy-beta-D-glucuronosyltransferase (321 aa).

2 consecutive transmembrane segments (helical) span residues 252 to 272 (FGFL…FIYI) and 290 to 310 (LYIA…YGFF).

Belongs to the glycosyltransferase 2 family.

The protein localises to the cell membrane. The enzyme catalyses an archaeal dolichyl N-acetyl-alpha-D-glucosaminyl phosphate + UDP-2,3-diacetamido-2,3-dideoxy-alpha-D-glucuronate = an archaeal dolichyl 3-O-(2,3-diacetamido-2,3-dideoxy- beta-D-glucuronosyl)-N-acetyl- alpha-D-glucosaminyl phosphate + UDP + H(+). It functions in the pathway cell surface structure biogenesis; S-layer biogenesis. The protein operates within protein modification; protein glycosylation. Functionally, involved in the assembly of an N-linked disaccharide that decorates the S-layer glycoprotein and flagellins. AglC catalyzes the transfer of 2,3-diacetamido-2,3-dideoxy-alpha-D-glucuronic acid (Glc-2,3-diNAcA) from uridine 5'-diphospho 2,3-diacetamido-2,3-dideoxy-alpha-D-glucuronic acid (UDP-Glc-2,3-diNAcA) to the AglK product Dol-P-GlcNAc to yield Dol-P-GlcNAc-Glc-2,3-diNAcA. AglC is specific for the monophosphate-linked Dol-P-GlcNAc. The protein is Dolichyl N-acetyl-alpha-D-glucosaminyl phosphate 3-beta-D-2,3-diacetamido-2,3-dideoxy-beta-D-glucuronosyltransferase of Methanococcus voltae.